A 384-amino-acid polypeptide reads, in one-letter code: Gastrin-releasing peptide receptor (384 aa).

Residues 1-38 (MALNDCFLLNLEVDHFMHCNISSHSADLPVNDDWSHPG) are Extracellular-facing. The N-linked (GlcNAc...) asparagine glycan is linked to asparagine 20. A helical membrane pass occupies residues 39 to 62 (ILYVIPAVYGVIILIGLIGNITLI). At 63 to 76 (KIFCTVKSMRNVPN) the chain is on the cytoplasmic side. Residues 77–96 (LFISSLALGDLLLLITCAPV) traverse the membrane as a helical segment. Over 97–114 (DASRYLADRWLFGRIGCK) the chain is Extracellular. Cysteine 113 and cysteine 196 form a disulfide bridge. A helical membrane pass occupies residues 115 to 136 (LIPFIQLTSVGVSVFTLTALSA). The Cytoplasmic portion of the chain corresponds to 137-152 (DRYKAIVRPMDIQASH). A helical membrane pass occupies residues 153–174 (ALMKICLKAAFIWIISMLLAIP). At 175 to 208 (EAVFSDLHPFHEESTNQTFISCAPYPHSNELHPK) the chain is on the extracellular side. A helical transmembrane segment spans residues 209-234 (IHSMASFLVFYVIPLSIISVYYYFIA). The Cytoplasmic portion of the chain corresponds to 235-264 (KNLIQSAYNLPVEGNIHVKKQIESRKRLAK). A helical membrane pass occupies residues 265–285 (TVLVFVGLFAFCWLPNHVIYL). At 286-298 (YRSYHYSEVDTSM) the chain is on the extracellular side. A helical transmembrane segment spans residues 299–325 (LHFVTSICARLLAFTNSCVNPFALYLL). Residues 326-384 (SKSFRKQFNTQLLCCQPGLIIRSHSTGRSTTCMTSLKSTNPSVATFSLINGNICHERYV) are Cytoplasmic-facing. Residue cysteine 339 is the site of S-palmitoyl cysteine attachment. Serine 350 carries the phosphoserine modification.

It belongs to the G-protein coupled receptor 1 family. Highly expressed in pancreas. Also expressed in stomach, adrenal cortex and brain. In brain, expressed in cells throughout the cortex.

Its subcellular location is the cell membrane. In terms of biological role, receptor for gastrin-releasing peptide (GRP). Signals via association with G proteins that activate a phosphatidylinositol-calcium second messenger system, resulting in Akt phosphorylation. Contributes to the regulation of food intake. Contributes to the perception of prurient stimuli and transmission of itch signals in the spinal cord that promote scratching behavior, but does not play a role in the perception of pain. Contributes primarily to nonhistaminergic itch sensation. In one study, shown to act in the amygdala as part of an inhibitory network which inhibits memory specifically related to learned fear. In another study, shown to contribute to disinhibition of glutamatergic cells in the auditory cortex via signaling on vasoactive intestinal peptide-expressing cells which leads to enhanced auditory fear memories. Contributes to the induction of sighing through signaling in the pre-Botzinger complex, a cluster of several thousand neurons in the ventrolateral medulla responsible for inspiration during respiratory activity. This Homo sapiens (Human) protein is Gastrin-releasing peptide receptor (GRPR).